The chain runs to 109 residues: U-scoloptoxin(16)-Cw1a (109 aa).

Residues 1 to 21 form the signal peptide; it reads MNAVFIVFLSAILSYPHESFA.

The protein belongs to the scoloptoxin-16 family. Contains 4 disulfide bonds. Expressed by the venom gland.

Its subcellular location is the secreted. In Cormocephalus westwoodi (Westwood's green centipede), this protein is U-scoloptoxin(16)-Cw1a.